We begin with the raw amino-acid sequence, 225 residues long: Ribose-5-phosphate isomerase A (225 aa).

Substrate-binding positions include 26–29, 82–85, and 95–98; these read TGST, DGAD, and KGGG. E104 serves as the catalytic Proton acceptor. K122 contacts substrate.

The protein belongs to the ribose 5-phosphate isomerase family. Homodimer.

It catalyses the reaction aldehydo-D-ribose 5-phosphate = D-ribulose 5-phosphate. It functions in the pathway carbohydrate degradation; pentose phosphate pathway; D-ribose 5-phosphate from D-ribulose 5-phosphate (non-oxidative stage): step 1/1. Functionally, catalyzes the reversible conversion of ribose-5-phosphate to ribulose 5-phosphate. This Streptococcus sanguinis (strain SK36) protein is Ribose-5-phosphate isomerase A.